The following is a 501-amino-acid chain: Carotenoid cleavage oxygenase (501 aa).

Fe cation contacts are provided by His162, His211, His314, and His494.

This sequence belongs to the carotenoid oxygenase family. The cofactor is Fe(2+).

Catalyzes the oxidative cleavage of several carotenoids and apocarotenoids in vitro. This is Carotenoid cleavage oxygenase from Mycobacterium tuberculosis (strain CDC 1551 / Oshkosh).